Consider the following 270-residue polypeptide: Putative F-box protein At3g24700 (270 aa).

One can recognise an F-box domain in the interval 1–45 (MLTDLPLDLESEILSRVPATSLQRLKTTCKRWYALFRDPRFVKKN).

In Arabidopsis thaliana (Mouse-ear cress), this protein is Putative F-box protein At3g24700.